A 197-amino-acid chain; its full sequence is Ribonuclease HII (197 aa).

The RNase H type-2 domain maps to 9 to 197 (ELIAGVDEVG…APVKKALEQF (189 aa)). Residues Asp15, Glu16, and Asp107 each coordinate a divalent metal cation.

The protein belongs to the RNase HII family. Requires Mn(2+) as cofactor. Mg(2+) serves as cofactor.

The protein resides in the cytoplasm. The enzyme catalyses Endonucleolytic cleavage to 5'-phosphomonoester.. Functionally, endonuclease that specifically degrades the RNA of RNA-DNA hybrids. The chain is Ribonuclease HII from Haemophilus influenzae (strain 86-028NP).